A 222-amino-acid chain; its full sequence is TPR repeat-containing protein BH2049 (222 aa).

TPR repeat units lie at residues alanine 34–histidine 67 and proline 169–lysine 202.

This Halalkalibacterium halodurans (strain ATCC BAA-125 / DSM 18197 / FERM 7344 / JCM 9153 / C-125) (Bacillus halodurans) protein is TPR repeat-containing protein BH2049.